A 197-amino-acid chain; its full sequence is Guanylate kinase (197 aa).

Positions 1–30 (MAATPRGTSPVPPDARPRLTVLSGPSGVGK) are disordered. In terms of domain architecture, Guanylate kinase-like spans 17–197 (PRLTVLSGPS…RELLALTNVV (181 aa)). Residue 24-31 (GPSGVGKS) coordinates ATP.

Belongs to the guanylate kinase family.

It is found in the cytoplasm. The catalysed reaction is GMP + ATP = GDP + ADP. In terms of biological role, essential for recycling GMP and indirectly, cGMP. In Streptomyces coelicolor (strain ATCC BAA-471 / A3(2) / M145), this protein is Guanylate kinase (gmk).